The primary structure comprises 373 residues: ADP-forming sulfoacetate-CoA ligase subunit SauC (373 aa).

The region spanning 9–249 (KEAFREKGLP…YLQFNGDIAL (241 aa)) is the ATP-grasp domain. 35 to 97 (FAEVGFPCVL…EEAVDIDREI (63 aa)) is a binding site for ATP. Mg(2+)-binding residues include glutamate 186 and asparagine 188.

Belongs to the succinate/malate CoA ligase beta subunit family. As to quaternary structure, forms a complex with SauD. Mg(2+) serves as cofactor.

The enzyme catalyses sulfoacetate + ATP + CoA = sulfoacetyl-CoA + ADP + phosphate. Involved in the degradation of sulfoacetate. Catalyzes the CoA- and ATP-dependent conversion of sulfoacetate to sulfoacetyl-CoA and ADP. Cannot use other sulfonic and carboxylic acids, and shows only residual activity with 3-sulfopropanoate and malonic acid. The chain is ADP-forming sulfoacetate-CoA ligase subunit SauC from Bilophila wadsworthia (strain 3_1_6).